The chain runs to 673 residues: DNA ligase (673 aa).

Residues 35 to 39 (DAEYD), 84 to 85 (SL), and glutamate 115 contribute to the NAD(+) site. Lysine 117 (N6-AMP-lysine intermediate) is an active-site residue. Residues arginine 138, glutamate 175, lysine 292, and lysine 316 each contribute to the NAD(+) site. Residues cysteine 410, cysteine 413, cysteine 428, and cysteine 434 each coordinate Zn(2+). Residues 592–673 (PRKLPLQGLV…FLDLLERGRP (82 aa)) form the BRCT domain.

The protein belongs to the NAD-dependent DNA ligase family. LigA subfamily. Requires Mg(2+) as cofactor. Mn(2+) is required as a cofactor.

It carries out the reaction NAD(+) + (deoxyribonucleotide)n-3'-hydroxyl + 5'-phospho-(deoxyribonucleotide)m = (deoxyribonucleotide)n+m + AMP + beta-nicotinamide D-nucleotide.. Its function is as follows. DNA ligase that catalyzes the formation of phosphodiester linkages between 5'-phosphoryl and 3'-hydroxyl groups in double-stranded DNA using NAD as a coenzyme and as the energy source for the reaction. It is essential for DNA replication and repair of damaged DNA. In Methylococcus capsulatus (strain ATCC 33009 / NCIMB 11132 / Bath), this protein is DNA ligase.